We begin with the raw amino-acid sequence, 593 residues long: MAKMRAVDAAMYVLEKEGITTAFGVPGAAINPFYSAMRKHGGIRHILARHVEGASHMAEGYTRATAGNIGVCLGTSGPAGTDMITALYSASADSIPILCITGQAPRARLHKEDFQAVDIEAIAKPVSKMAVTVREAALVPRVLQQAFHLMRSGRPGPVLVDLPFDVQVAEIEFDPDMYEPLPVYKPAASRMQIEKAVEMLIQAERPVIVAGGGVINADAAALLQQFAELTSVPVIPTLMGWGCIPDDHELMAGMVGLQTAHRYGNATLLASDMVFGIGNRFANRHTGSVEKYTEGRKIVHIDIEPTQIGRVLCPDLGIVSDAKAALTLLVEVAQEMQKAGRLPCRKEWVADCQQRKRTLLRKTHFDNVPVKPQRVYEEMNKAFGRDVCYVTTIGLSQIAAAQMLHVFKDRHWINCGQAGPLGWTIPAALGVCAADPKRNVVAISGDFDFQFLIEELAVGAQFNIPYIHVLVNNAYLGLIRQSQRAFDMDYCVQLAFENINSSEVNGYGVDHVKVAEGLGCKAIRVFKPEDIAPAFEQAKALMAQYRVPVVVEVILERVTNISMGSELDNVMEFEDIADNAADAPTETCFMHYE.

The protein belongs to the TPP enzyme family. As to quaternary structure, homotetramer. The cofactor is Mg(2+). It depends on thiamine diphosphate as a cofactor.

The catalysed reaction is 2 glyoxylate + H(+) = 2-hydroxy-3-oxopropanoate + CO2. The protein operates within organic acid metabolism; glycolate degradation; 3-phospho-D-glycerate from glycolate: step 2/4. Its function is as follows. Catalyzes the condensation of two molecules of glyoxylate to give 2-hydroxy-3-oxopropanoate (also termed tartronate semialdehyde). The chain is Glyoxylate carboligase (gcl) from Escherichia coli O157:H7.